A 203-amino-acid chain; its full sequence is Outer-membrane lipoprotein carrier protein (203 aa).

An N-terminal signal peptide occupies residues 1 to 21 (MKKIAITCALLSSLVASSVWA).

The protein belongs to the LolA family. Monomer.

It is found in the periplasm. Participates in the translocation of lipoproteins from the inner membrane to the outer membrane. Only forms a complex with a lipoprotein if the residue after the N-terminal Cys is not an aspartate (The Asp acts as a targeting signal to indicate that the lipoprotein should stay in the inner membrane). The protein is Outer-membrane lipoprotein carrier protein of Escherichia coli O139:H28 (strain E24377A / ETEC).